A 1579-amino-acid polypeptide reads, in one-letter code: Pentafunctional AROM polypeptide (1579 aa).

The tract at residues 1–383 (MLVKVPILGR…YGKSAHVVSD (383 aa)) is 3-dehydroquinate synthase. NAD(+)-binding positions include 40 to 42 (DSN), 75 to 78 (EANK), 106 to 108 (GGI), and D111. R122 contributes to the 7-phospho-2-dehydro-3-deoxy-D-arabino-heptonate binding site. 131 to 132 (TS) serves as a coordination point for NAD(+). Residues D138 and K144 each contribute to the 7-phospho-2-dehydro-3-deoxy-D-arabino-heptonate site. NAD(+) is bound at residue K153. A 7-phospho-2-dehydro-3-deoxy-D-arabino-heptonate-binding site is contributed by N154. NAD(+)-binding positions include 171-174 (WLQS) and N182. E186 lines the Zn(2+) pocket. 7-phospho-2-dehydro-3-deoxy-D-arabino-heptonate-binding positions include 186 to 189 (EVIK) and K249. E259 (proton acceptor; for 3-dehydroquinate synthase activity) is an active-site residue. Residues 263–267 (RNLLN) and H270 contribute to the 7-phospho-2-dehydro-3-deoxy-D-arabino-heptonate site. H270 serves as a coordination point for Zn(2+). The active-site Proton acceptor; for 3-dehydroquinate synthase activity is H274. Residues H286 and K355 each contribute to the 7-phospho-2-dehydro-3-deoxy-D-arabino-heptonate site. Zn(2+) is bound at residue H286. Residues 396–862 (VYPFNNIPRD…WDVLHTELGA (467 aa)) form an EPSP synthase region. C844 serves as the catalytic For EPSP synthase activity. The interval 881–1071 (SVVIIGMRAA…IPTRRSAFVC (191 aa)) is shikimate kinase. Residue 886–893 (GMRAAGKT) coordinates ATP. The 3-dehydroquinase stretch occupies residues 1072–1284 (LTFENLTEYT…AAPGQLTVAE (213 aa)). H1189 (proton acceptor; for 3-dehydroquinate dehydratase activity) is an active-site residue. K1218 serves as the catalytic Schiff-base intermediate with substrate; for 3-dehydroquinate dehydratase activity. The segment at 1297-1579 (KKDFFVVGSP…KAIYDAVTEI (283 aa)) is shikimate dehydrogenase.

The protein in the N-terminal section; belongs to the sugar phosphate cyclases superfamily. Dehydroquinate synthase family. In the 2nd section; belongs to the EPSP synthase family. This sequence in the 3rd section; belongs to the shikimate kinase family. It in the 4th section; belongs to the type-I 3-dehydroquinase family. The protein in the C-terminal section; belongs to the shikimate dehydrogenase family. As to quaternary structure, homodimer. Zn(2+) serves as cofactor.

Its subcellular location is the cytoplasm. It carries out the reaction 7-phospho-2-dehydro-3-deoxy-D-arabino-heptonate = 3-dehydroquinate + phosphate. The enzyme catalyses 3-dehydroquinate = 3-dehydroshikimate + H2O. The catalysed reaction is shikimate + NADP(+) = 3-dehydroshikimate + NADPH + H(+). It catalyses the reaction shikimate + ATP = 3-phosphoshikimate + ADP + H(+). It carries out the reaction 3-phosphoshikimate + phosphoenolpyruvate = 5-O-(1-carboxyvinyl)-3-phosphoshikimate + phosphate. It functions in the pathway metabolic intermediate biosynthesis; chorismate biosynthesis; chorismate from D-erythrose 4-phosphate and phosphoenolpyruvate: step 2/7. It participates in metabolic intermediate biosynthesis; chorismate biosynthesis; chorismate from D-erythrose 4-phosphate and phosphoenolpyruvate: step 3/7. Its pathway is metabolic intermediate biosynthesis; chorismate biosynthesis; chorismate from D-erythrose 4-phosphate and phosphoenolpyruvate: step 4/7. The protein operates within metabolic intermediate biosynthesis; chorismate biosynthesis; chorismate from D-erythrose 4-phosphate and phosphoenolpyruvate: step 5/7. It functions in the pathway metabolic intermediate biosynthesis; chorismate biosynthesis; chorismate from D-erythrose 4-phosphate and phosphoenolpyruvate: step 6/7. Functionally, the AROM polypeptide catalyzes 5 consecutive enzymatic reactions in prechorismate polyaromatic amino acid biosynthesis. The chain is Pentafunctional AROM polypeptide from Candida glabrata (strain ATCC 2001 / BCRC 20586 / JCM 3761 / NBRC 0622 / NRRL Y-65 / CBS 138) (Yeast).